The chain runs to 162 residues: Ribosome maturation factor RimM (162 aa).

In terms of domain architecture, PRC barrel spans 86–160 (EGRYYYFALI…SIHVDPIPGL (75 aa)).

Belongs to the RimM family. As to quaternary structure, binds ribosomal protein uS19.

Its subcellular location is the cytoplasm. Its function is as follows. An accessory protein needed during the final step in the assembly of 30S ribosomal subunit, possibly for assembly of the head region. Essential for efficient processing of 16S rRNA. May be needed both before and after RbfA during the maturation of 16S rRNA. It has affinity for free ribosomal 30S subunits but not for 70S ribosomes. This Thermus thermophilus (strain ATCC 27634 / DSM 579 / HB8) protein is Ribosome maturation factor RimM.